The chain runs to 181 residues: Isopentenyl-diphosphate Delta-isomerase (181 aa).

2 residues coordinate Mn(2+): H25 and H32. The 135-residue stretch at 30 to 164 (PLHLAFSCWL…PWAFSPWMVM (135 aa)) folds into the Nudix hydrolase domain. The active site involves C67. Position 69 (H69) interacts with Mn(2+). Residue E87 participates in Mg(2+) binding. Positions 114 and 116 each coordinate Mn(2+). E116 is a catalytic residue.

The protein belongs to the IPP isomerase type 1 family. As to quaternary structure, homodimer. Mg(2+) serves as cofactor. The cofactor is Mn(2+).

It localises to the cytoplasm. It catalyses the reaction isopentenyl diphosphate = dimethylallyl diphosphate. It participates in isoprenoid biosynthesis; dimethylallyl diphosphate biosynthesis; dimethylallyl diphosphate from isopentenyl diphosphate: step 1/1. Its function is as follows. Catalyzes the 1,3-allylic rearrangement of the homoallylic substrate isopentenyl (IPP) to its highly electrophilic allylic isomer, dimethylallyl diphosphate (DMAPP). The polypeptide is Isopentenyl-diphosphate Delta-isomerase (Salmonella paratyphi B (strain ATCC BAA-1250 / SPB7)).